A 268-amino-acid polypeptide reads, in one-letter code: Eukaryotic translation initiation factor 3 subunit G-2 (268 aa).

In terms of domain architecture, RRM spans 187–265 (SAVRISNLSE…LILCVEWSKP (79 aa)).

Belongs to the eIF-3 subunit G family. In terms of assembly, component of the eukaryotic translation initiation factor 3 (eIF-3) complex. The eIF-3 complex interacts with pix.

The protein resides in the cytoplasm. Functionally, RNA-binding component of the eukaryotic translation initiation factor 3 (eIF-3) complex, which is involved in protein synthesis of a specialized repertoire of mRNAs and, together with other initiation factors, stimulates binding of mRNA and methionyl-tRNAi to the 40S ribosome. The eIF-3 complex specifically targets and initiates translation of a subset of mRNAs involved in cell proliferation. This subunit can bind 18S rRNA. This Drosophila willistoni (Fruit fly) protein is Eukaryotic translation initiation factor 3 subunit G-2.